A 502-amino-acid chain; its full sequence is ATP synthase subunit alpha (502 aa).

The disordered stretch occupies residues 115-134; the sequence is IDGQGPINTTKTRPVEQKAT. 169-176 is a binding site for ATP; the sequence is GDRQTGKT.

This sequence belongs to the ATPase alpha/beta chains family. As to quaternary structure, F-type ATPases have 2 components, CF(1) - the catalytic core - and CF(0) - the membrane proton channel. CF(1) has five subunits: alpha(3), beta(3), gamma(1), delta(1), epsilon(1). CF(0) has three main subunits: a(1), b(2) and c(9-12). The alpha and beta chains form an alternating ring which encloses part of the gamma chain. CF(1) is attached to CF(0) by a central stalk formed by the gamma and epsilon chains, while a peripheral stalk is formed by the delta and b chains.

The protein localises to the cell membrane. It catalyses the reaction ATP + H2O + 4 H(+)(in) = ADP + phosphate + 5 H(+)(out). Produces ATP from ADP in the presence of a proton gradient across the membrane. The alpha chain is a regulatory subunit. In Staphylococcus haemolyticus (strain JCSC1435), this protein is ATP synthase subunit alpha.